Consider the following 357-residue polypeptide: Protein ORF58 (357 aa).

11 helical membrane-spanning segments follow: residues 20-40, 44-64, 78-98, 101-121, 132-152, 157-177, 219-239, 242-262, 270-290, 300-320, and 333-353; these read LAAT…FTLF, ITAV…CMCL, WICA…GFTF, VPFI…YPLA, IVHR…YLLL, FVSG…LLAF, VVVF…IGLL, VLIG…SCVG, ALFV…ILGS, CLCC…IQLI, and MVLA…SVIN.

The protein belongs to the herpesviridae BMRF2 family.

It is found in the virion membrane. Its subcellular location is the host cell membrane. In terms of biological role, participates in rearrangement of cellular actin to increase intercellular contacts and thereby promotes virus cell-to-cell spreadin$g. The protein is Protein ORF58 (ORF58) of Homo sapiens (Human).